A 669-amino-acid polypeptide reads, in one-letter code: Trifunctional UDP-glucose 4,6-dehydratase/UDP-4-keto-6-deoxy-D-glucose 3,5-epimerase/UDP-4-keto-L-rhamnose-reductase RHM1 (669 aa).

An NAD(+)-binding site is contributed by 13 to 19 (GAAGFIA). A substrate-binding site is contributed by Thr-132. Asp-133 functions as the Proton donor in the catalytic mechanism. Residues Glu-134 and Tyr-159 each act as proton acceptor in the active site. 391–397 (GKTGWIG) contacts NADP(+).

In the N-terminal section; belongs to the NAD(P)-dependent epimerase/dehydratase family. dTDP-glucose dehydratase subfamily. The protein in the C-terminal section; belongs to the dTDP-4-dehydrorhamnose reductase family. Requires NAD(+) as cofactor. The cofactor is NADP(+). In terms of tissue distribution, expressed in roots, stems, leaves, seedlings, inflorescence tips, and siliques. Detected in the adaxial side of cotyledons, in the emerging leaves and in trichomes. Also detected in the root tip, more precisely in the epidermal cells in the meristematic and elongation zone.

It is found in the cytoplasm. Its subcellular location is the cytosol. The enzyme catalyses UDP-alpha-D-glucose = UDP-4-dehydro-6-deoxy-alpha-D-glucose + H2O. Its pathway is carbohydrate biosynthesis. In terms of biological role, trifunctional enzyme involved in UDP-beta-L-rhamnose biosynthesis, a precursor of the primary cell wall components rhamnogalacturonan I (RG-I) and rhamnogalacturonan II (RG-II). Plays a major role in supplying UDP-rhamnose for flavonol biosynthesis. Catalyzes the dehydration of UDP-glucose to form UDP-4-dehydro-6-deoxy-D-glucose followed by the epimerization of the C3' and C5' positions of UDP-4-dehydro-6-deoxy-D-glucose to form UDP-4-keto-beta-L-rhamnose and the reduction of UDP-4-keto-beta-L-rhamnose to yield UDP-beta-L-rhamnose. The sequence is that of Trifunctional UDP-glucose 4,6-dehydratase/UDP-4-keto-6-deoxy-D-glucose 3,5-epimerase/UDP-4-keto-L-rhamnose-reductase RHM1 from Arabidopsis thaliana (Mouse-ear cress).